The chain runs to 196 residues: dCTP deaminase (196 aa).

DCTP-binding positions include 113–118 (RSSLAR), Asp-131, 139–141 (VLE), Tyr-174, Lys-181, and Gln-185. The active-site Proton donor/acceptor is Glu-141.

This sequence belongs to the dCTP deaminase family. Homotrimer.

It catalyses the reaction dCTP + H2O + H(+) = dUTP + NH4(+). Its pathway is pyrimidine metabolism; dUMP biosynthesis; dUMP from dCTP (dUTP route): step 1/2. In terms of biological role, catalyzes the deamination of dCTP to dUTP. The sequence is that of dCTP deaminase from Wigglesworthia glossinidia brevipalpis.